The following is a 337-amino-acid chain: Lipoyl synthase (337 aa).

Cys81, Cys86, Cys92, Cys107, Cys111, Cys114, and Ser323 together coordinate [4Fe-4S] cluster. The Radical SAM core domain maps to 93–312 (FSHGTATFMI…EDYGNALGFS (220 aa)).

This sequence belongs to the radical SAM superfamily. Lipoyl synthase family. The cofactor is [4Fe-4S] cluster.

The protein resides in the cytoplasm. The enzyme catalyses [[Fe-S] cluster scaffold protein carrying a second [4Fe-4S](2+) cluster] + N(6)-octanoyl-L-lysyl-[protein] + 2 oxidized [2Fe-2S]-[ferredoxin] + 2 S-adenosyl-L-methionine + 4 H(+) = [[Fe-S] cluster scaffold protein] + N(6)-[(R)-dihydrolipoyl]-L-lysyl-[protein] + 4 Fe(3+) + 2 hydrogen sulfide + 2 5'-deoxyadenosine + 2 L-methionine + 2 reduced [2Fe-2S]-[ferredoxin]. Its pathway is protein modification; protein lipoylation via endogenous pathway; protein N(6)-(lipoyl)lysine from octanoyl-[acyl-carrier-protein]: step 2/2. Functionally, catalyzes the radical-mediated insertion of two sulfur atoms into the C-6 and C-8 positions of the octanoyl moiety bound to the lipoyl domains of lipoate-dependent enzymes, thereby converting the octanoylated domains into lipoylated derivatives. This is Lipoyl synthase from Xanthomonas axonopodis pv. citri (strain 306).